Consider the following 561-residue polypeptide: Putative transport protein ASA_2308 (561 aa).

The next 5 membrane-spanning stretches (helical) occupy residues 8–28, 37–57, 66–86, 90–110, and 161–181; these read LLHQSDSLLLFVVLAFGLLLG, IGNTIGVLFTALLFGQMGFEF, FMLFIFCVGIEAGPHFFSVFL, IHYITLTLVILLTALLLTVGL, and NMGIGYALTYLVGLVGLMLVV. 2 RCK C-terminal domains span residues 206-291 and 293-376; these read SDNE…NYRN and KEVF…KIGF. The next 5 membrane-spanning stretches (helical) occupy residues 386–406, 409–429, 450–470, 476–496, and 541–561; these read LVAFTTFFVLGLLIGSVSLVF, LEFGLGNAVGLLLAGILMGYL, LGLAVFMVSTGLKAGGGILDH, AVVLFSGMLVTTLPVLVGYLF, and TYAVANVMLTLAGSFIIGFWF.

It belongs to the AAE transporter (TC 2.A.81) family. YbjL subfamily.

It localises to the cell membrane. The polypeptide is Putative transport protein ASA_2308 (Aeromonas salmonicida (strain A449)).